The chain runs to 290 residues: GTPase Era (290 aa).

Residues 2–168 enclose the Era-type G domain; the sequence is KVCIISILGR…IEILKEYAYN (167 aa). Positions 10–17 are G1; the sequence is GRPNVGKS. 10 to 17 is a binding site for GTP; the sequence is GRPNVGKS. The G2 stretch occupies residues 36-40; sequence QTTRD. The interval 57-60 is G3; sequence DTPG. Residues 57 to 61 and 118 to 121 each bind GTP; these read DTPGI and SKID. The G4 stretch occupies residues 118 to 121; it reads SKID. Residues 147 to 149 are G5; it reads VSN. Residues 199 to 275 form the KH type-2 domain; sequence LTDELPHSIA…TLNLKVKVSN (77 aa).

Belongs to the TRAFAC class TrmE-Era-EngA-EngB-Septin-like GTPase superfamily. Era GTPase family. As to quaternary structure, monomer.

Its subcellular location is the cytoplasm. It is found in the cell membrane. Its function is as follows. An essential GTPase that binds both GDP and GTP, with rapid nucleotide exchange. Plays a role in 16S rRNA processing and 30S ribosomal subunit biogenesis and possibly also in cell cycle regulation and energy metabolism. The sequence is that of GTPase Era from Mycoplasmopsis agalactiae (strain NCTC 10123 / CIP 59.7 / PG2) (Mycoplasma agalactiae).